We begin with the raw amino-acid sequence, 379 residues long: Protein hairy (379 aa).

Positions 20–50 are disordered; that stretch reads STQQQQQQQQHKEAPIKSDRRSNKPIMEKRR. The segment covering 29–47 has biased composition (basic and acidic residues); sequence QHKEAPIKSDRRSNKPIME. An interaction with Topors region spans residues 36–55; sequence KSDRRSNKPIMEKRRRARIN. The 58-residue stretch at 38–95 folds into the bHLH domain; it reads DRRSNKPIMEKRRRARINNCLNELKTLILDATKKDPARHSKLEKADILEKTVKHLQEL. The region spanning 114–143 is the Orange domain; that stretch reads FKAGFADCANEVSRFPGLDSTQRRRLLQHL. Disordered stretches follow at residues 167-208 and 298-345; these read QSLH…NTTA and QRTA…VKPS. 2 stretches are compositionally biased toward low complexity: residues 182–207 and 301–328; these read PEQE…TNTT and ASTG…GSYA. A WRPW motif motif is present at residues 376–379; that stretch reads WRPW.

In terms of assembly, transcription repression requires formation of a complex with a corepressor protein (Groucho).

It is found in the nucleus. Its function is as follows. Pair-rule protein that regulates embryonic segmentation and adult bristle patterning. Transcriptional repressor of genes that require a bHLH protein for their transcription (e.g. ftz). In Drosophila virilis (Fruit fly), this protein is Protein hairy.